A 351-amino-acid chain; its full sequence is MVSFSEITTLGVGGSIACFIECSPDEFVERAPGLFRPGHHVLVVGGGSNLVASDCPFPGTVVRLKSRDTIVSDDGDYTRFSISAGTSWDDLVSYSLDLGFDQLSPMSGIPGTFGGALAQNISAYGAAVRDVLGSVEVYDACTSEVVTFGLEDMRYGYRTSALKNVRNKVILGGTLLLKPGPTPVLHRQLANALKVDLGTYCSGKQVRDQVLRIRAEKGMLPRYLVPKGFDVCNTSSVGSFFVNPIVSKEHLSRLRRLVPQGALNSSVIQTDEMGGVKVSAAFLLEQSGFEKGFCISGSQAAISTQHSLAIVNRGGATAAEVIELAGLITRTVSRKFDIHLIPEPVFVGLEL.

An FAD-binding PCMH-type domain is found at 11–213 (GVGGSIACFI…KQVRDQVLRI (203 aa)). The active site involves R158. The active-site Proton donor is S239. E343 is a catalytic residue.

Belongs to the MurB family. FAD serves as cofactor.

It localises to the cytoplasm. It catalyses the reaction UDP-N-acetyl-alpha-D-muramate + NADP(+) = UDP-N-acetyl-3-O-(1-carboxyvinyl)-alpha-D-glucosamine + NADPH + H(+). The protein operates within cell wall biogenesis; peptidoglycan biosynthesis. Its function is as follows. Cell wall formation. In Tropheryma whipplei (strain Twist) (Whipple's bacillus), this protein is UDP-N-acetylenolpyruvoylglucosamine reductase.